Here is a 501-residue protein sequence, read N- to C-terminus: Cytochrome P450 3A31 (501 aa).

Cysteine 440 lines the heme pocket.

It belongs to the cytochrome P450 family. Heme serves as cofactor. Expressed constitutively in liver.

It localises to the endoplasmic reticulum membrane. It is found in the microsome membrane. It carries out the reaction an organic molecule + reduced [NADPH--hemoprotein reductase] + O2 = an alcohol + oxidized [NADPH--hemoprotein reductase] + H2O + H(+). Its function is as follows. Cytochromes P450 are a group of heme-thiolate monooxygenases. In liver microsomes, this enzyme is involved in an NADPH-dependent electron transport pathway. It oxidizes a variety of structurally unrelated compounds, including steroids, fatty acids, and xenobiotics. This Mesocricetus auratus (Golden hamster) protein is Cytochrome P450 3A31 (CYP3A31).